We begin with the raw amino-acid sequence, 918 residues long: DNA mismatch repair protein MutS (918 aa).

662 to 669 is an ATP binding site; it reads GPNMAGKS.

Belongs to the DNA mismatch repair MutS family.

Its function is as follows. This protein is involved in the repair of mismatches in DNA. It is possible that it carries out the mismatch recognition step. This protein has a weak ATPase activity. The protein is DNA mismatch repair protein MutS of Sorangium cellulosum (strain So ce56) (Polyangium cellulosum (strain So ce56)).